We begin with the raw amino-acid sequence, 327 residues long: tRNA N6-adenosine threonylcarbamoyltransferase (327 aa).

Residues H109 and H113 each coordinate Fe cation. Residues 132–136 (MVSGG), D165, G178, D182, and N268 contribute to the substrate site. D296 is a Fe cation binding site.

This sequence belongs to the KAE1 / TsaD family. It depends on Fe(2+) as a cofactor.

It is found in the cytoplasm. It catalyses the reaction L-threonylcarbamoyladenylate + adenosine(37) in tRNA = N(6)-L-threonylcarbamoyladenosine(37) in tRNA + AMP + H(+). In terms of biological role, required for the formation of a threonylcarbamoyl group on adenosine at position 37 (t(6)A37) in tRNAs that read codons beginning with adenine. Is involved in the transfer of the threonylcarbamoyl moiety of threonylcarbamoyl-AMP (TC-AMP) to the N6 group of A37, together with TsaE and TsaB. TsaD likely plays a direct catalytic role in this reaction. This Thermotoga petrophila (strain ATCC BAA-488 / DSM 13995 / JCM 10881 / RKU-1) protein is tRNA N6-adenosine threonylcarbamoyltransferase.